Reading from the N-terminus, the 911-residue chain is Valine--tRNA ligase (911 aa).

Residues 57 to 67 (PTVSGSLHVGH) carry the 'HIGH' region motif. The short motif at 599-603 (KMSKS) is the 'KMSKS' region element. Residue Lys-602 participates in ATP binding. The tract at residues 882–911 (EESAAEDAPETEVAVEASELGEPPAKKPKH) is disordered.

Belongs to the class-I aminoacyl-tRNA synthetase family. ValS type 2 subfamily. Monomer.

The protein localises to the cytoplasm. The enzyme catalyses tRNA(Val) + L-valine + ATP = L-valyl-tRNA(Val) + AMP + diphosphate. Its function is as follows. Catalyzes the attachment of valine to tRNA(Val). As ValRS can inadvertently accommodate and process structurally similar amino acids such as threonine, to avoid such errors, it has a 'posttransfer' editing activity that hydrolyzes mischarged Thr-tRNA(Val) in a tRNA-dependent manner. This chain is Valine--tRNA ligase, found in Bifidobacterium longum (strain DJO10A).